The sequence spans 417 residues: Sulfite reductase, dissimilatory-type subunit alpha (417 aa).

Positions 170, 176, 214, 218, 264, 284, 287, and 290 each coordinate [4Fe-4S] cluster. Cysteine 218 contributes to the siroheme binding site.

[4Fe-4S] cluster serves as cofactor. The cofactor is siroheme.

It carries out the reaction [DsrC protein]-trisulfide + NAD(+) + 3 H2O = [DsrC protein]-dithiol + sulfite + NADH + 3 H(+). Catalyzes the reduction of sulfite to sulfide. This is the terminal oxidation reaction in sulfate respiration. The protein is Sulfite reductase, dissimilatory-type subunit alpha (dsrA) of Allochromatium vinosum (strain ATCC 17899 / DSM 180 / NBRC 103801 / NCIMB 10441 / D) (Chromatium vinosum).